Here is a 2039-residue protein sequence, read N- to C-terminus: Calcium-channel protein CCH1 (2039 aa).

2 disordered regions span residues 1 to 171 and 206 to 288; these read MQGR…PPRS and PQLK…PQKE. A compositionally biased stretch (basic and acidic residues) spans 64–80; sequence STEEKKGDEYNGNDKDS. N-linked (GlcNAc...) asparagine glycosylation occurs at N98. Composition is skewed to low complexity over residues 122 to 132 and 147 to 164; these read SPSTKSAKSSS and FSSY…SPSS. Basic and acidic residues predominate over residues 209 to 226; it reads KSEKSRPVSDVGEDRGEG. Residues N257 and N269 are each glycosylated (N-linked (GlcNAc...) asparagine). The segment covering 271-281 has biased composition (basic residues); the sequence is SRKKPSPKFFH. Phosphoserine is present on S284. The chain crosses the membrane as a helical span at residues 346 to 366; sequence YSLLYNTLLTFYAILLAIRTY. N-linked (GlcNAc...) asparagine glycosylation occurs at N379. Residues 384–404 form a helical membrane-spanning segment; that stretch reads FIFILSACFTGNDIAKIIAFG. N-linked (GlcNAc...) asparagine glycosylation is present at N559. A run of 3 helical transmembrane segments spans residues 563–583, 658–678, and 691–711; these read MLVY…QGSF, IVNS…TDLM, and LFFI…LIAV. N-linked (GlcNAc...) asparagine glycosylation is found at N754 and N760. The next 3 membrane-spanning stretches (helical) occupy residues 766–786, 809–829, and 841–861; these read LAIY…DIGM, ISIV…PNMW, and FIIS…VLGH. Residues N882 and N900 are each glycosylated (N-linked (GlcNAc...) asparagine). The next 2 helical transmembrane spans lie at 904–924 and 942–962; these read FYFF…EGVI and SFLS…LYAL. A glycan (N-linked (GlcNAc...) asparagine) is linked at N968. The helical transmembrane segment at 978–998 threads the bilayer; sequence FFIIWFLLSNSVILNIFIALI. N1153 carries N-linked (GlcNAc...) asparagine glycosylation. Residues 1207-1227 form a helical membrane-spanning segment; that stretch reads VFVFIFALATILLIVCSCYVT. N-linked (GlcNAc...) asparagine glycosylation is present at N1240. 2 consecutive transmembrane segments (helical) span residues 1247-1267 and 1277-1297; these read CAFI…DGFI and PWNF…IAYL. The N-linked (GlcNAc...) asparagine glycan is linked to N1302. Helical transmembrane passes span 1340–1360 and 1408–1428; these read IFEA…WGLS and FASA…VDLL. N-linked (GlcNAc...) asparagine glycosylation is present at N1433. The next 5 membrane-spanning stretches (helical) occupy residues 1452-1472, 1529-1549, 1554-1574, 1596-1616, and 1618-1638; these read FLVL…VSFI, NFYY…MLLS, PGNL…VFLI, IRLS…HVPA, and HYWF…FIIP. N1640 carries an N-linked (GlcNAc...) asparagine glycan. The chain crosses the membrane as a helical span at residues 1654 to 1674; sequence LPPILSLTYTWGVLFLVYAIA. N-linked (GlcNAc...) asparagine glycans are attached at residues N1687 and N1732. A helical transmembrane segment spans residues 1748–1768; sequence LMSWNIISMYIFVNMFVSLII. N-linked (GlcNAc...) asparagine glycans are attached at residues N1770 and N1785. The region spanning 1787–1822 is the EF-hand domain; it reads SEIKKYIEAWSKFDTDGTGELELSYLPRIMHSFDGP. The segment at 2011-2039 is disordered; the sequence is PRMNQDSTMEPPEEPIDNNDDSANDLIDR. A compositionally biased stretch (acidic residues) spans 2021–2033; that stretch reads PPEEPIDNNDDSA.

The protein belongs to the calcium channel alpha-1 subunit (TC 1.A.1.11) family. In terms of assembly, interacts with MID1 to form a Ca(2+) influx channel.

The protein resides in the cell membrane. Its function is as follows. Voltage-gated, high-affinity calcium channel that functions together with MID1 to mediate calcium entry into cells. Required during conditions of environmental stress. The polypeptide is Calcium-channel protein CCH1 (CCH1) (Saccharomyces cerevisiae (strain ATCC 204508 / S288c) (Baker's yeast)).